Reading from the N-terminus, the 589-residue chain is Cysteine/serine-rich nuclear protein 1 (589 aa).

Disordered stretches follow at residues 1-62 (MTGL…RDFC) and 309-388 (FREL…GVDD). Composition is skewed to low complexity over residues 17–41 (SSVSSSSSSSGCQSRSCSPSSSVSR) and 345–368 (DNSCSSDMTDSSTASSSASGTSEA).

Belongs to the AXUD1 family. Ubiquitous. Most abundantly expressed in lung, placenta, skeletal muscle, pancreas and leukocyte. Frequently down-regulated in lung, kidney, liver and colon cancers compared with their corresponding normal tissues.

The protein resides in the nucleus. Its function is as follows. Binds to the consensus sequence 5'-AGAGTG-3' and has transcriptional activator activity. May have a tumor-suppressor function. May play a role in apoptosis. In Homo sapiens (Human), this protein is Cysteine/serine-rich nuclear protein 1 (CSRNP1).